The chain runs to 77 residues: Large ribosomal subunit protein bL28 (77 aa).

The protein belongs to the bacterial ribosomal protein bL28 family.

The polypeptide is Large ribosomal subunit protein bL28 (Verminephrobacter eiseniae (strain EF01-2)).